Here is a 204-residue protein sequence, read N- to C-terminus: Ras-related protein R-Ras2 (204 aa).

Position 2 is an N-acetylalanine (A2). 21-29 (GGGGVGKSA) contributes to the GTP binding site. Positions 43–51 (YDPTIEDSY) match the Effector region motif. GTP is bound by residues 68 to 72 (DTAGQ), 127 to 130 (NKAD), and 157 to 159 (SAK). Phosphoserine is present on S186. 4 N6-palmitoyl lysine lipidation sites follow: K192, K194, K196, and K197. C199 is lipidated: S-palmitoyl cysteine. Position 201 is a cysteine methyl ester (C201). Residue C201 is the site of S-farnesyl cysteine attachment. Residues 202–204 (VIF) constitute a propeptide, removed in mature form.

The protein belongs to the small GTPase superfamily. Ras family. In terms of assembly, interacts with RASSF5. Post-translationally, may be post-translationally modified by both palmitoylation and polyisoprenylation. In terms of processing, fatty-acylation at Lys-192, Lys-194; lys-196 and Lys-197 is required for localization to the plasma membrane and activity. Defatty-acylated by SIRT6, affecting its localization to the plasma membrane. As to expression, ubiquitously present in all tissues examined, with the highest levels in heart, placenta, and skeletal muscle. Moderate levels in lung and liver; low levels in brain, kidney, and pancreas.

It is found in the cell membrane. The protein resides in the golgi apparatus membrane. The enzyme catalyses GTP + H2O = GDP + phosphate + H(+). Its function is as follows. GTP-binding protein with GTPase activity, involved in the regulation of MAPK signaling pathway and thereby controlling multiple cellular processes. Regulates craniofacial development. This is Ras-related protein R-Ras2 from Homo sapiens (Human).